The sequence spans 176 residues: NAD(P)H-quinone oxidoreductase subunit 6, chloroplastic (176 aa).

The next 5 membrane-spanning stretches (helical) occupy residues 10–30 (FLLV…VLLP), 32–52 (PIYS…FYIL), 61–81 (AQLL…VMFM), 92–112 (LWTV…ISLI), and 152–172 (FFLP…GAIA).

It belongs to the complex I subunit 6 family. As to quaternary structure, NDH is composed of at least 16 different subunits, 5 of which are encoded in the nucleus.

The protein localises to the plastid. It is found in the chloroplast thylakoid membrane. The enzyme catalyses a plastoquinone + NADH + (n+1) H(+)(in) = a plastoquinol + NAD(+) + n H(+)(out). It carries out the reaction a plastoquinone + NADPH + (n+1) H(+)(in) = a plastoquinol + NADP(+) + n H(+)(out). Its function is as follows. NDH shuttles electrons from NAD(P)H:plastoquinone, via FMN and iron-sulfur (Fe-S) centers, to quinones in the photosynthetic chain and possibly in a chloroplast respiratory chain. The immediate electron acceptor for the enzyme in this species is believed to be plastoquinone. Couples the redox reaction to proton translocation, and thus conserves the redox energy in a proton gradient. This chain is NAD(P)H-quinone oxidoreductase subunit 6, chloroplastic (ndhG), found in Solanum bulbocastanum (Wild potato).